Consider the following 375-residue polypeptide: Queuine tRNA-ribosyltransferase (375 aa).

D89 functions as the Proton acceptor in the catalytic mechanism. Residues 89–93 (DSGGF), D143, Q187, and G214 contribute to the substrate site. Residues 245-251 (GVGKPED) are RNA binding. The active-site Nucleophile is the D264. The segment at 269-273 (TRNAR) is RNA binding; important for wobble base 34 recognition. Positions 302, 304, 307, and 333 each coordinate Zn(2+).

Belongs to the queuine tRNA-ribosyltransferase family. As to quaternary structure, homodimer. Within each dimer, one monomer is responsible for RNA recognition and catalysis, while the other monomer binds to the replacement base PreQ1. Requires Zn(2+) as cofactor.

It catalyses the reaction 7-aminomethyl-7-carbaguanine + guanosine(34) in tRNA = 7-aminomethyl-7-carbaguanosine(34) in tRNA + guanine. It functions in the pathway tRNA modification; tRNA-queuosine biosynthesis. Functionally, catalyzes the base-exchange of a guanine (G) residue with the queuine precursor 7-aminomethyl-7-deazaguanine (PreQ1) at position 34 (anticodon wobble position) in tRNAs with GU(N) anticodons (tRNA-Asp, -Asn, -His and -Tyr). Catalysis occurs through a double-displacement mechanism. The nucleophile active site attacks the C1' of nucleotide 34 to detach the guanine base from the RNA, forming a covalent enzyme-RNA intermediate. The proton acceptor active site deprotonates the incoming PreQ1, allowing a nucleophilic attack on the C1' of the ribose to form the product. After dissociation, two additional enzymatic reactions on the tRNA convert PreQ1 to queuine (Q), resulting in the hypermodified nucleoside queuosine (7-(((4,5-cis-dihydroxy-2-cyclopenten-1-yl)amino)methyl)-7-deazaguanosine). The chain is Queuine tRNA-ribosyltransferase from Escherichia coli O81 (strain ED1a).